The chain runs to 294 residues: Mitochondrial substrate carrier family protein ucpB (294 aa).

The Mitochondrial intermembrane portion of the chain corresponds to 1 to 10 (MTSQESIGIK). Solcar repeat units lie at residues 9–93 (IKFL…IKNY), 101–187 (TNLL…IKHM), and 197–288 (DGLQ…LRKV). A helical transmembrane segment spans residues 11 to 31 (FLFGGLSCMGAAVVSNPVDVL). The Mitochondrial matrix portion of the chain corresponds to 32-67 (KTRFQIHGEGIDSKSLGLVNGTIKIIKNEGISAMYK). The helical transmembrane segment at 68–88 (GLTPSLLREATYSTLRMGGYD) threads the bilayer. Topologically, residues 89–106 (VIKNYFIDSNGKTNLLSK) are mitochondrial intermembrane. Residues 107–127 (VTSGALSGALGACITSPTDLI) form a helical membrane-spanning segment. The Mitochondrial matrix portion of the chain corresponds to 128-161 (KVRMQASSKGVKYDSISSAFKEIIAKEGIKGLWK). A helical membrane pass occupies residues 162 to 182 (GVGPTTQRAALLTASQIPSYD). Over 183–192 (HIKHMILDHG) the chain is Mitochondrial intermembrane. A helical membrane pass occupies residues 193 to 213 (IIQVDGLQVHIVSSIFAGLIA). Topologically, residues 214–267 (SITTSPVDLVKTRIMNQPFDSNGVGLIYKSSYDCFKKTFQSEGISGLYKGFLPN) are mitochondrial matrix. The helical transmembrane segment at 268 to 285 (WFRIGPHTIVTFILYEYL) threads the bilayer. Residues 286 to 294 (RKVSGIKPI) lie on the Mitochondrial intermembrane side of the membrane.

The protein belongs to the mitochondrial carrier (TC 2.A.29) family.

Its subcellular location is the mitochondrion inner membrane. In terms of biological role, mitochondrial solute carriers shuttle metabolites, nucleotides, and cofactors through the mitochondrial inner membrane. The sequence is that of Mitochondrial substrate carrier family protein ucpB (ucpB) from Dictyostelium discoideum (Social amoeba).